The chain runs to 612 residues: UvrABC system protein C (612 aa).

Residues 11 to 90 form the GIY-YIG domain; the sequence is TASGVYLMKG…IKKYRPRYNI (80 aa). The 36-residue stretch at 200-235 folds into the UVR domain; sequence SEVVESLQHQMAAAAERMAFEEAARLRDQLRAIEQT.

It belongs to the UvrC family. In terms of assembly, interacts with UvrB in an incision complex.

It is found in the cytoplasm. In terms of biological role, the UvrABC repair system catalyzes the recognition and processing of DNA lesions. UvrC both incises the 5' and 3' sides of the lesion. The N-terminal half is responsible for the 3' incision and the C-terminal half is responsible for the 5' incision. This is UvrABC system protein C from Syntrophotalea carbinolica (strain DSM 2380 / NBRC 103641 / GraBd1) (Pelobacter carbinolicus).